The primary structure comprises 356 residues: Terpene synthase 10 (356 aa).

The DDxx(x)D/E motif motif lies at 90-95; sequence DDYLDS. Positions 232 to 240 match the NDxxSxxxD/E motif motif; sequence NDAVSYAKE.

It belongs to the terpene synthase family.

It carries out the reaction geranylgeranyl diphosphate = beta-araneosene + diphosphate. In terms of biological role, terpene synthase that converts its substrate farnesyl diphosphate (FPP) into several unidentified sesquiterpenes. TPS10 also converts geranylgeranyl diphosphate (GGPP) into the diterpene beta-araneosene. The chain is Terpene synthase 10 from Dictyostelium purpureum (Slime mold).